A 303-amino-acid polypeptide reads, in one-letter code: Coenzyme PQQ synthesis protein B (303 aa).

Belongs to the PqqB family.

It participates in cofactor biosynthesis; pyrroloquinoline quinone biosynthesis. Its function is as follows. May be involved in the transport of PQQ or its precursor to the periplasm. The polypeptide is Coenzyme PQQ synthesis protein B (Acinetobacter baumannii (strain AB0057)).